Consider the following 223-residue polypeptide: Thiamine-phosphate synthase (223 aa).

4-amino-2-methyl-5-(diphosphooxymethyl)pyrimidine-binding positions include 45–49 (QYREK) and Asn77. Residues Asp78 and Asp97 each contribute to the Mg(2+) site. 4-amino-2-methyl-5-(diphosphooxymethyl)pyrimidine is bound at residue Thr116. 142 to 144 (SYT) is a 2-[(2R,5Z)-2-carboxy-4-methylthiazol-5(2H)-ylidene]ethyl phosphate binding site. Lys145 serves as a coordination point for 4-amino-2-methyl-5-(diphosphooxymethyl)pyrimidine. 2-[(2R,5Z)-2-carboxy-4-methylthiazol-5(2H)-ylidene]ethyl phosphate contacts are provided by residues Gly173 and 193–194 (VT).

Belongs to the thiamine-phosphate synthase family. Mg(2+) is required as a cofactor.

The enzyme catalyses 2-[(2R,5Z)-2-carboxy-4-methylthiazol-5(2H)-ylidene]ethyl phosphate + 4-amino-2-methyl-5-(diphosphooxymethyl)pyrimidine + 2 H(+) = thiamine phosphate + CO2 + diphosphate. It carries out the reaction 2-(2-carboxy-4-methylthiazol-5-yl)ethyl phosphate + 4-amino-2-methyl-5-(diphosphooxymethyl)pyrimidine + 2 H(+) = thiamine phosphate + CO2 + diphosphate. It catalyses the reaction 4-methyl-5-(2-phosphooxyethyl)-thiazole + 4-amino-2-methyl-5-(diphosphooxymethyl)pyrimidine + H(+) = thiamine phosphate + diphosphate. The protein operates within cofactor biosynthesis; thiamine diphosphate biosynthesis; thiamine phosphate from 4-amino-2-methyl-5-diphosphomethylpyrimidine and 4-methyl-5-(2-phosphoethyl)-thiazole: step 1/1. Condenses 4-methyl-5-(beta-hydroxyethyl)thiazole monophosphate (THZ-P) and 2-methyl-4-amino-5-hydroxymethyl pyrimidine pyrophosphate (HMP-PP) to form thiamine monophosphate (TMP). This is Thiamine-phosphate synthase from Dictyoglomus thermophilum (strain ATCC 35947 / DSM 3960 / H-6-12).